Here is a 151-residue protein sequence, read N- to C-terminus: Transcription elongation factor Spt5 (151 aa).

Positions 98–128 constitute a KOW domain; sequence PGQVVEIVAGAFKGMKARVIDVNQSKGQVTV.

It belongs to the archaeal Spt5 family. As to quaternary structure, heterodimer composed of Spt4 and Spt5. Interacts with RNA polymerase (RNAP).

Stimulates transcription elongation. This is Transcription elongation factor Spt5 from Aeropyrum pernix (strain ATCC 700893 / DSM 11879 / JCM 9820 / NBRC 100138 / K1).